We begin with the raw amino-acid sequence, 817 residues long: Protein EFR3 homolog B (817 aa).

3 positions are modified to phosphoserine: Ser212, Ser214, and Ser216.

The protein belongs to the EFR3 family. As to quaternary structure, component of a phosphatidylinositol 4-kinase (PI4K) complex, composed of PI4KA, EFR3 (EFR3A or EFR3B), TTC7 (TTC7A or TTC7B) and HYCC (HYCC1 or HYCC2). Post-translationally, palmitoylated at its N-terminus, anchoring the protein to the plasma membrane. In terms of tissue distribution, widely expressed.

Its subcellular location is the cell membrane. The protein localises to the cytoplasm. It localises to the cytosol. In terms of biological role, component of a complex required to localize phosphatidylinositol 4-kinase (PI4K) to the plasma membrane. The complex acts as a regulator of phosphatidylinositol 4-phosphate (PtdIns(4)P) synthesis. In the complex, EFR3B probably acts as the membrane-anchoring component. Also involved in responsiveness to G-protein-coupled receptors; it is however unclear whether this role is direct or indirect. The chain is Protein EFR3 homolog B (Efr3b) from Mus musculus (Mouse).